The primary structure comprises 116 residues: HVA22-like protein e (116 aa).

A run of 3 helical transmembrane segments spans residues 12 to 32 (HSLAGPVVMLLYPLYASVIAI), 42 to 62 (QWLAYWILYSFLTLSELILQS), and 63 to 83 (LLEWIPIWYTAKLVFVAWLVL).

Belongs to the DP1 family. In terms of tissue distribution, predominantly expressed in stem.

The protein localises to the membrane. The sequence is that of HVA22-like protein e (HVA22E) from Arabidopsis thaliana (Mouse-ear cress).